The following is a 2253-amino-acid chain: Protein Ycf2 (2253 aa).

ATP is bound at residue 1600 to 1607 (GFIGTGRS).

The protein belongs to the Ycf2 family.

Its subcellular location is the plastid. The protein resides in the chloroplast stroma. Functionally, probable ATPase of unknown function. Its presence in a non-photosynthetic plant (Epifagus virginiana) and experiments in tobacco indicate that it has an essential function which is probably not related to photosynthesis. The protein is Protein Ycf2 of Nymphaea alba (White water-lily).